We begin with the raw amino-acid sequence, 356 residues long: 1,2-phenylacetyl-CoA epoxidase, subunit E (356 aa).

The FAD-binding FR-type domain occupies 2–106; the sequence is TTFHSLTVAK…MVPQGHFGYQ (105 aa). The oxidoreductase stretch occupies residues 112–228; that stretch reads QGRYLAIAAG…AAMMDDAETA (117 aa). Positions 262-354 constitute a 2Fe-2S ferredoxin-type domain; the sequence is QKVTVRQDGR…DVVVDFDAKG (93 aa). Residues cysteine 299, cysteine 304, cysteine 307, and cysteine 337 each coordinate [2Fe-2S] cluster.

It in the N-terminal section; belongs to the FAD-binding oxidoreductase type 6 family. The cofactor is [2Fe-2S] cluster. FAD serves as cofactor.

Its pathway is aromatic compound metabolism; phenylacetate degradation. In terms of biological role, component of 1,2-phenylacetyl-CoA epoxidase multicomponent enzyme system which catalyzes the reduction of phenylacetyl-CoA (PA-CoA) to form 1,2-epoxyphenylacetyl-CoA. The subunit E is a reductase with a preference for NADPH and FAD, capable of reducing cytochrome c. The sequence is that of 1,2-phenylacetyl-CoA epoxidase, subunit E (paaE) from Escherichia coli (strain K12).